Here is a 203-residue protein sequence, read N- to C-terminus: 5-formyltetrahydrofolate cyclo-ligase (203 aa).

At alanine 2 the chain carries N-acetylalanine. Residues 10–14 (KRSLR) and arginine 14 each bind ATP. Substrate contacts are provided by residues leucine 56, glutamate 61, and 148–152 (RGKGY). 145 to 153 (RLGRGKGYY) serves as a coordination point for ATP. Mg(2+) contacts are provided by aspartate 154 and aspartate 189.

This sequence belongs to the 5-formyltetrahydrofolate cyclo-ligase family. Monomer. The cofactor is Mg(2+).

Its subcellular location is the cytoplasm. The catalysed reaction is (6S)-5-formyl-5,6,7,8-tetrahydrofolate + ATP = (6R)-5,10-methenyltetrahydrofolate + ADP + phosphate. Contributes to tetrahydrofolate metabolism. Helps regulate carbon flow through the folate-dependent one-carbon metabolic network that supplies carbon for the biosynthesis of purines, thymidine and amino acids. Catalyzes the irreversible conversion of 5-formyltetrahydrofolate (5-FTHF) to yield 5,10-methenyltetrahydrofolate. The polypeptide is 5-formyltetrahydrofolate cyclo-ligase (MTHFS) (Homo sapiens (Human)).